A 686-amino-acid chain; its full sequence is Proprotein convertase subtilisin/kexin type 9 (686 aa).

The N-terminal stretch at 1-28 is a signal peptide; sequence MGTVSSRRLWWPLPLLLLLLLGPAGTRA. A propeptide spanning residues 29–150 is cleaved from the precursor; sequence QEDDDDDYEE…IEEDSSVFAQ (122 aa). Tyr36 is modified (sulfotyrosine). Position 45 is a phosphoserine (Ser45). The Inhibitor I9 domain occupies 75 to 147; it reads TYVVVLKEET…VDYIEEDSSV (73 aa). The 307-residue stretch at 153–459 folds into the Peptidase S8 domain; that stretch reads PWNLERITPA…GWQLFCRTVW (307 aa). Active-site charge relay system residues include Asp184 and His224. Cystine bridges form between Cys221–Cys253 and Cys321–Cys356. The Charge relay system role is filled by Ser384. Residues 448-686 are C-terminal domain; that stretch reads GEGWQLFCRT…CRSQHLAQAS (239 aa). 3 cysteine pairs are disulfide-bonded: Cys455/Cys525, Cys475/Cys524, and Cys484/Cys507. A glycan (N-linked (GlcNAc...) asparagine) is linked at Asn531. Disulfide bonds link Cys532/Cys599, Cys550/Cys598, Cys560/Cys586, Cys606/Cys677, Cys624/Cys676, and Cys633/Cys652. Ser686 carries the phosphoserine modification.

This sequence belongs to the peptidase S8 family. Monomer. Can self-associate to form dimers and higher multimers which may have increased LDLR degrading activity. The precursor protein but not the mature protein may form multimers. Interacts with APOB, VLDLR, LRP8/APOER2 and BACE1. The full-length immature form (pro-PCSK9) interacts with SCNN1A, SCNN1B and SCNN1G. The pro-PCSK9 form (via C-terminal domain) interacts with LDLR. Interacts (via the C-terminal domain) with ANXA2 (via repeat Annexin 1); the interaction inhibits the degradation of LDLR. The cofactor is Ca(2+). Cleavage by furin and PCSK5 generates a truncated inactive protein that is unable to induce LDLR degradation. Post-translationally, undergoes autocatalytic cleavage in the endoplasmic reticulum to release the propeptide from the N-terminus and the cleavage of the propeptide is strictly required for its maturation and activation. The cleaved propeptide however remains associated with the catalytic domain through non-covalent interactions, preventing potential substrates from accessing its active site. As a result, it is secreted from cells as a propeptide-containing, enzymatically inactive protein. In terms of processing, phosphorylation protects the propeptide against proteolysis.

Its subcellular location is the cytoplasm. The protein resides in the secreted. It localises to the endosome. The protein localises to the lysosome. It is found in the cell surface. Its subcellular location is the endoplasmic reticulum. The protein resides in the golgi apparatus. With respect to regulation, its proteolytic activity is autoinhibited by the non-covalent binding of the propeptide to the catalytic domain. Inhibited by EGTA. Its function is as follows. Crucial player in the regulation of plasma cholesterol homeostasis. Binds to low-density lipid receptor family members: low density lipoprotein receptor (LDLR), very low density lipoprotein receptor (VLDLR), apolipoprotein E receptor (LRP1/APOER) and apolipoprotein receptor 2 (LRP8/APOER2), and promotes their degradation in intracellular acidic compartments. Acts via a non-proteolytic mechanism to enhance the degradation of the hepatic LDLR through a clathrin LDLRAP1/ARH-mediated pathway. May prevent the recycling of LDLR from endosomes to the cell surface or direct it to lysosomes for degradation. Can induce ubiquitination of LDLR leading to its subsequent degradation. Inhibits intracellular degradation of APOB via the autophagosome/lysosome pathway in a LDLR-independent manner. Involved in the disposal of non-acetylated intermediates of BACE1 in the early secretory pathway. Inhibits epithelial Na(+) channel (ENaC)-mediated Na(+) absorption by reducing ENaC surface expression primarily by increasing its proteasomal degradation. Regulates neuronal apoptosis via modulation of LRP8/APOER2 levels and related anti-apoptotic signaling pathways. The polypeptide is Proprotein convertase subtilisin/kexin type 9 (PCSK9) (Saguinus labiatus (Red-chested mustached tamarin)).